The chain runs to 315 residues: Gamma-hemolysin component C (315 aa).

An N-terminal signal peptide occupies residues Met1–Ala29.

Belongs to the aerolysin family. In terms of assembly, toxicity requires sequential binding and synergistic association of a class S and a class F component which form heterooligomeric complexes. HlgB (class F) associates with either hlgA thus forming an AB toxin or with hlgC thus forming a CB toxin.

It is found in the secreted. In terms of biological role, toxin that seems to act by forming pores in the membrane of the cell. Has a hemolytic and a leucotoxic activity. The protein is Gamma-hemolysin component C (hlgC) of Staphylococcus aureus (strain NCTC 8325 / PS 47).